We begin with the raw amino-acid sequence, 144 residues long: MFLNTIQPAVGATHAGRRVGRGIGSGLGKTGGRGHKGQKSRSGGFHKVGFEGGQMPLQRRLPKRGFKSLTASANAQLRLSELESIAVNEIDILVLKQAGLIASTVSNVKVIASGEISKAVALKGIKVTKGARAAIEAVGGKIEM.

The disordered stretch occupies residues 20–49; that stretch reads GRGIGSGLGKTGGRGHKGQKSRSGGFHKVG. Positions 21–31 are enriched in gly residues; sequence RGIGSGLGKTG.

The protein belongs to the universal ribosomal protein uL15 family. As to quaternary structure, part of the 50S ribosomal subunit.

Its function is as follows. Binds to the 23S rRNA. This Neisseria meningitidis serogroup C (strain 053442) protein is Large ribosomal subunit protein uL15.